The primary structure comprises 450 residues: Gastrin/cholecystokinin type B receptor (450 aa).

The Extracellular segment spans residues 1–57; the sequence is MELLKLNSSVQGPGPGSGSSLCHPGVSLLNSSSAGNLSCEPPRIRGTGTRELELAIR. N-linked (GlcNAc...) asparagine glycosylation is found at N7, N30, and N36. The helical transmembrane segment at 58-79 threads the bilayer; sequence ITLYAVIFLMSIGGNMLIIVVL. At 80–87 the chain is on the cytoplasmic side; that stretch reads GLSRRLRT. A helical transmembrane segment spans residues 88–109; the sequence is VTNAFLLSLAVSDLLLAVACMP. The Extracellular segment spans residues 110–131; that stretch reads FTLLPNLMGTFIFGTVICKAVS. A disulfide bridge links C127 with C205. The helical transmembrane segment at 132 to 150 threads the bilayer; that stretch reads YLMGVSVSVSTLNLVAIAL. Over 151–170 the chain is Cytoplasmic; that stretch reads ERYSAICRPLQARVWQTRSH. Residues 171-189 form a helical membrane-spanning segment; sequence AARVILATWLLSGLLMVPY. Residues 190–219 are Extracellular-facing; it reads PVYTVVQPVGPRVLQCMHRWPSARVRQTWS. A helical transmembrane segment spans residues 220–242; it reads VLLLMLLFFIPGVVMAVAYGLIS. The Cytoplasmic segment spans residues 243–336; the sequence is RELYLGLRFD…KLLAKKRVVR (94 aa). The interval 258–277 is disordered; that stretch reads DTQSRVRNQGGLPGGTAPGP. Residues 337–358 form a helical membrane-spanning segment; the sequence is MLLVIVLLFFLCWLPIYSANTW. Over 359-376 the chain is Extracellular; sequence CAFDGPGAHRALSGAPIS. Residues 377-397 form a helical membrane-spanning segment; it reads FIHLLSYASACVNPLVYCFMH. Topologically, residues 398–450 are cytoplasmic; it reads RRFRQACLDTCARCCPRPPRARPRPLPDEDPPTPSIASLSRLSYTTISTLGPG. C411 carries the S-palmitoyl cysteine lipid modification.

This sequence belongs to the G-protein coupled receptor 1 family. In terms of tissue distribution, stomach and brain.

The protein localises to the cell membrane. In terms of biological role, receptor for gastrin and cholecystokinin. The CCK-B receptors occur throughout the central nervous system where they modulate anxiety, analgesia, arousal, and neuroleptic activity. This receptor mediates its action by association with G proteins that activate a phosphatidylinositol-calcium second messenger system. The chain is Gastrin/cholecystokinin type B receptor (CCKBR) from Mastomys natalensis (African soft-furred rat).